A 94-amino-acid chain; its full sequence is ATP synthase subunit c (94 aa).

2 consecutive transmembrane segments (helical) span residues 15–35 (VSVG…WGLI) and 61–81 (GGLM…FIFA).

It belongs to the ATPase C chain family. As to quaternary structure, F-type ATPases have 2 components, F(1) - the catalytic core - and F(0) - the membrane proton channel. F(1) has five subunits: alpha(3), beta(3), gamma(1), delta(1), epsilon(1). F(0) has three main subunits: a(1), b(2) and c(10-14). The alpha and beta chains form an alternating ring which encloses part of the gamma chain. F(1) is attached to F(0) by a central stalk formed by the gamma and epsilon chains, while a peripheral stalk is formed by the delta and b chains.

The protein localises to the cell inner membrane. In terms of biological role, f(1)F(0) ATP synthase produces ATP from ADP in the presence of a proton or sodium gradient. F-type ATPases consist of two structural domains, F(1) containing the extramembraneous catalytic core and F(0) containing the membrane proton channel, linked together by a central stalk and a peripheral stalk. During catalysis, ATP synthesis in the catalytic domain of F(1) is coupled via a rotary mechanism of the central stalk subunits to proton translocation. Key component of the F(0) channel; it plays a direct role in translocation across the membrane. A homomeric c-ring of between 10-14 subunits forms the central stalk rotor element with the F(1) delta and epsilon subunits. This is ATP synthase subunit c from Nitrosococcus oceani (strain ATCC 19707 / BCRC 17464 / JCM 30415 / NCIMB 11848 / C-107).